A 122-amino-acid polypeptide reads, in one-letter code: Large ribosomal subunit protein uL14 (122 aa).

Belongs to the universal ribosomal protein uL14 family. In terms of assembly, part of the 50S ribosomal subunit. Forms a cluster with proteins L3 and L19. In the 70S ribosome, L14 and L19 interact and together make contacts with the 16S rRNA in bridges B5 and B8.

In terms of biological role, binds to 23S rRNA. Forms part of two intersubunit bridges in the 70S ribosome. The sequence is that of Large ribosomal subunit protein uL14 from Carsonella ruddii (strain PV).